We begin with the raw amino-acid sequence, 385 residues long: 1-deoxy-D-xylulose 5-phosphate reductoisomerase (385 aa).

NADPH is bound by residues T13, G14, S15, I16, N40, and N122. K123 contributes to the 1-deoxy-D-xylulose 5-phosphate binding site. E124 provides a ligand contact to NADPH. Mn(2+) is bound at residue D148. Positions 149, 150, 177, and 200 each coordinate 1-deoxy-D-xylulose 5-phosphate. E150 provides a ligand contact to Mn(2+). G206 is an NADPH binding site. 1-deoxy-D-xylulose 5-phosphate is bound by residues S213, N218, K219, and E222. Mn(2+) is bound at residue E222.

The protein belongs to the DXR family. Mg(2+) serves as cofactor. It depends on Mn(2+) as a cofactor.

The catalysed reaction is 2-C-methyl-D-erythritol 4-phosphate + NADP(+) = 1-deoxy-D-xylulose 5-phosphate + NADPH + H(+). It functions in the pathway isoprenoid biosynthesis; isopentenyl diphosphate biosynthesis via DXP pathway; isopentenyl diphosphate from 1-deoxy-D-xylulose 5-phosphate: step 1/6. Its function is as follows. Catalyzes the NADPH-dependent rearrangement and reduction of 1-deoxy-D-xylulose-5-phosphate (DXP) to 2-C-methyl-D-erythritol 4-phosphate (MEP). The chain is 1-deoxy-D-xylulose 5-phosphate reductoisomerase from Francisella tularensis subsp. tularensis (strain WY96-3418).